Here is a 206-residue protein sequence, read N- to C-terminus: Ras-related protein Rab-18 (206 aa).

An N-acetylmethionine modification is found at methionine 1. The GTP site is built by serine 17, glycine 20, lysine 21, serine 22, serine 23, aspartate 34, proline 35, threonine 40, glycine 66, lysine 123, and aspartate 125. Serine 22 is a binding site for Mg(2+). 2 consecutive short sequence motifs (switch) follow at residues 31–45 and 63–80; these read DTFD…GVDF and DTAG…YYRG. Position 40 (threonine 40) interacts with Mg(2+). A Phosphoserine modification is found at serine 144. Alanine 152 is a binding site for GTP. Cysteine 199 is lipidated: S-palmitoyl cysteine. Position 203 is a cysteine methyl ester (cysteine 203). The S-geranylgeranyl cysteine moiety is linked to residue cysteine 203. A propeptide spans 204-206 (removed in mature form); the sequence is SVL.

This sequence belongs to the small GTPase superfamily. Rab family. In terms of assembly, interacts (in GTP-bound form) with ZFYVE1. Interacts with ZW10 and this interaction is enhanced in the presence of ZFYVE1. Interacts with BSCL2. The cofactor is Mg(2+). In terms of tissue distribution, expression is high in the brain, moderate in the pituitary, and low in the liver. Detected in all tissues. Highly enriched on apical endocytic structures in polarized epithelial cells of kidney proximal tubules. Detected on both the apical and basolateral domains in epithelial cells of the intestine.

The protein resides in the endoplasmic reticulum membrane. The protein localises to the golgi apparatus. It is found in the cis-Golgi network membrane. It localises to the lipid droplet. Its subcellular location is the apical cell membrane. It carries out the reaction GTP + H2O = GDP + phosphate + H(+). Its activity is regulated as follows. Regulated by guanine nucleotide exchange factor (GEF) RAB3GAP1-RAB3GAP2 complex at the cis-Golgi membrane which promotes the exchange of bound GDP for free GTP. Regulated by GTPase activating protein (GAP) TBC1D20 at the ER membrane which increases the GTP hydrolysis activity. Inhibited by GDP dissociation inhibitors (GDIs) which prevent Rab-GDP dissociation. The small GTPases Rab are key regulators of intracellular membrane trafficking, from the formation of transport vesicles to their fusion with membranes. Rabs cycle between an inactive GDP-bound form and an active GTP-bound form that is able to recruit to membranes different sets of downstream effectors directly responsible for vesicle formation, movement, tethering and fusion. RAB18 is required for the localization of ZFYVE1 to lipid droplets and for its function in mediating the formation of endoplasmic reticulum-lipid droplets (ER-LD) contacts. Also required for maintaining endoplasmic reticulum structure. Plays a role in apical endocytosis/recycling. Plays a key role in eye and brain development and neurodegeneration. The chain is Ras-related protein Rab-18 from Mus musculus (Mouse).